Consider the following 556-residue polypeptide: Arginine--tRNA ligase 1 (556 aa).

The short motif at 132–142 (ANPTGNLHLGH) is the 'HIGH' region element.

It belongs to the class-I aminoacyl-tRNA synthetase family. In terms of assembly, monomer.

The protein localises to the cytoplasm. The enzyme catalyses tRNA(Arg) + L-arginine + ATP = L-arginyl-tRNA(Arg) + AMP + diphosphate. The protein is Arginine--tRNA ligase 1 (argS1) of Halalkalibacterium halodurans (strain ATCC BAA-125 / DSM 18197 / FERM 7344 / JCM 9153 / C-125) (Bacillus halodurans).